Reading from the N-terminus, the 204-residue chain is Protein GrpE (204 aa).

The tract at residues 1–52 (MSSKNNPESETKAKNKWEKVMEAEEEQEEGGGDGSQEMEPHREGLEFPSREK) is disordered. Composition is skewed to basic and acidic residues over residues 7–22 (PESE…KVME) and 38–52 (MEPH…SREK).

Belongs to the GrpE family. In terms of assembly, homodimer.

It localises to the cytoplasm. In terms of biological role, participates actively in the response to hyperosmotic and heat shock by preventing the aggregation of stress-denatured proteins, in association with DnaK and GrpE. It is the nucleotide exchange factor for DnaK and may function as a thermosensor. Unfolded proteins bind initially to DnaJ; upon interaction with the DnaJ-bound protein, DnaK hydrolyzes its bound ATP, resulting in the formation of a stable complex. GrpE releases ADP from DnaK; ATP binding to DnaK triggers the release of the substrate protein, thus completing the reaction cycle. Several rounds of ATP-dependent interactions between DnaJ, DnaK and GrpE are required for fully efficient folding. This chain is Protein GrpE, found in Coxiella burnetii (strain Dugway 5J108-111).